A 520-amino-acid chain; its full sequence is Membrane-bound glycerophospholipid O-acyltransferase 2 (520 aa).

Helical transmembrane passes span 22-42 (PIDQVNFVVCQLFALLAAIWF), 61-81 (TLLGLYLALFCFGWYALHFLV), 88-108 (CIMIIIGVENMHNYCFVFALG), 184-204 (FMGILAGPLCSYKDYITFIEG), 237-257 (LLVCGLSLLFHLTICTTLPVE), and 264-284 (FQATASWPTKIIYLYISLLAA). Catalysis depends on residues asparagine 342 and histidine 373. Transmembrane regions (helical) follow at residues 366–386 (FILSAIWHGVYPGYYLTFLTG), 416–436 (VITWIVTQVAISYTVVPFVLL), and 444–464 (FYSSWYYCLHILGILVLLLLP).

The protein belongs to the membrane-bound acyltransferase family. In terms of tissue distribution, expressed in neutrophils.

Its subcellular location is the endoplasmic reticulum membrane. It catalyses the reaction a 1-acyl-sn-glycero-3-phosphocholine + an acyl-CoA = a 1,2-diacyl-sn-glycero-3-phosphocholine + CoA. The catalysed reaction is a 1-acyl-sn-glycero-3-phosphoethanolamine + an acyl-CoA = a 1,2-diacyl-sn-glycero-3-phosphoethanolamine + CoA. It carries out the reaction a 1-acyl-sn-glycero-3-phosphate + an acyl-CoA = a 1,2-diacyl-sn-glycero-3-phosphate + CoA. The enzyme catalyses (9Z)-hexadecenoyl-CoA + 1-hexadecanoyl-sn-glycero-3-phosphocholine = 1-hexadecanoyl-2-(9Z-hexadecenoyl)-sn-glycero-3-phosphocholine + CoA. It catalyses the reaction 1-hexadecanoyl-sn-glycero-3-phosphoethanolamine + (9Z)-octadecenoyl-CoA = 1-hexadecanoyl-2-(9Z-octadecenoyl)-sn-glycero-3-phosphoethanolamine + CoA. The catalysed reaction is 1-hexadecanoyl-sn-glycero-3-phosphoethanolamine + (9Z)-hexadecenoyl-CoA = 1-hexadecanoyl-2-(9Z)-hexadecenoyl-sn-glycero-3-phosphoethanolamine + CoA. It carries out the reaction 1-(9Z-octadecenoyl)-sn-glycero-3-phospho-L-serine + hexadecanoyl-CoA = 1-(9Z)-octadecenoyl-2-hexadecanoyl-sn-glycero-3-phosphoserine + CoA. The enzyme catalyses (9Z,12Z)-octadecadienoyl-CoA + 1-hexadecanoyl-sn-glycero-3-phosphocholine = 1-hexadecanoyl-2-(9Z,12Z-octadecadienoyl)-sn-glycero-3-phosphocholine + CoA. It catalyses the reaction 1-hexadecanoyl-sn-glycero-3-phosphocholine + (9Z)-octadecenoyl-CoA = 1-hexadecanoyl-2-(9Z-octadecenoyl)-sn-glycero-3-phosphocholine + CoA. The catalysed reaction is 1-hexadecanoyl-sn-glycero-3-phosphate + (9Z)-hexadecenoyl-CoA = 1-hexadecanoyl-2-[(9Z)-hexadec-9-enoyl]-sn-glycero-3-phosphate + CoA. It carries out the reaction 1-hexadecanoyl-sn-glycero-3-phosphate + (9Z)-octadecenoyl-CoA = 1-hexadecanoyl-2-(9Z-octadecenoyl)-sn-glycero-3-phosphate + CoA. The enzyme catalyses a 1-O-(1Z-alkenyl)-sn-glycero-3-phosphocholine + (9Z)-octadecenoyl-CoA = 1-O-(1Z)-alkenyl-2-(9Z)-octadecenoyl-sn-glycero-3-phosphocholine + CoA. It catalyses the reaction a 1-O-(1Z-alkenyl)-sn-glycero-3-phosphoethanolamine + (9Z)-octadecenoyl-CoA = 1-O-(1Z)-alkenyl-2-(9Z)-octadecenoyl-sn-glycero-3-phosphoethanolamine + CoA. The catalysed reaction is 1-octadecanoyl-sn-glycero-3-phosphoethanolamine + (9Z)-octadecenoyl-CoA = 1-octadecanoyl-2-(9Z-octadecenoyl)-sn-glycero-3-phosphoethanolamine + CoA. It carries out the reaction 1-octadecanoyl-sn-glycero-3-phosphocholine + (9Z)-octadecenoyl-CoA = 1-octadecanoyl-2-(9Z-octadecenoyl)-sn-glycero-3-phosphocholine + CoA. The enzyme catalyses 1-(9Z-octadecenoyl)-sn-glycero-3-phosphoethanolamine + (9Z)-octadecenoyl-CoA = 1,2-di-(9Z-octadecenoyl)-sn-glycero-3-phosphoethanolamine + CoA. It functions in the pathway lipid metabolism; phospholipid metabolism. With respect to regulation, partially inhibited by thimerosal. In terms of biological role, acyltransferase which catalyzes the transfer of an acyl group from an acyl-CoA to a lysophospholipid leading to the production of a phospholipid and participates in the reacylation step of the phospholipid remodeling pathway also known as the Lands cycle. Catalyzes preferentially the acylation of lysophosphatidylethanolamine (1-acyl-sn-glycero-3-phosphoethanolamine or LPE) and lysophosphatidic acid (LPA) and to a lesser extend lysophosphatidylcholine (LPC) and lysophosphatidylserine (LPS). Prefers oleoyl-CoA as the acyl donor. May be involved in chondrocyte differentiation. In Homo sapiens (Human), this protein is Membrane-bound glycerophospholipid O-acyltransferase 2.